The sequence spans 215 residues: FGFR1 oncogene partner 2 homolog (215 aa).

Coiled-coil stretches lie at residues 5-104 and 161-185; these read IEKA…MSKY and KEQERIFQLEQENKGLREILQITRE. The disordered stretch occupies residues 194–215; it reads DASESTSLSALVTNSDLSLRKN. Over residues 197–215 the composition is skewed to polar residues; the sequence is ESTSLSALVTNSDLSLRKN.

The protein belongs to the SIKE family.

The protein resides in the cytoplasm. May be involved in wound healing pathway. This is FGFR1 oncogene partner 2 homolog (FGFR1OP2) from Pongo abelii (Sumatran orangutan).